Consider the following 390-residue polypeptide: Uroporphyrinogen decarboxylase 2, chloroplastic (390 aa).

Residues 1–30 constitute a chloroplast transit peptide; it reads MATACPPLSLQPAYLSGRSARARRPPPAVR. Residues 70–74, Phe-89, Ser-119, Asp-120, Tyr-197, Ser-252, and His-367 each bind substrate; that span reads RQAGR.

This sequence belongs to the uroporphyrinogen decarboxylase family. In terms of assembly, homodimer.

Its subcellular location is the plastid. It localises to the chloroplast. It carries out the reaction uroporphyrinogen III + 4 H(+) = coproporphyrinogen III + 4 CO2. The protein operates within porphyrin-containing compound metabolism; protoporphyrin-IX biosynthesis; coproporphyrinogen-III from 5-aminolevulinate: step 4/4. Catalyzes the decarboxylation of four acetate groups of uroporphyrinogen-III to yield coproporphyrinogen-III. The chain is Uroporphyrinogen decarboxylase 2, chloroplastic from Oryza sativa subsp. japonica (Rice).